Reading from the N-terminus, the 227-residue chain is MAYPFQLGLQDATSPIMEELLHFHDHTLMIVFLISSLVLYIISLMLTTKLTHTSTMDAQEVETVWTILPAIILILIALPSLRILYMMDEINNPSLTVKTMGHQWYWSYEYTDYEDLNFDSYMIPTQELKPGELRLLEVDNRVVLPMEMTVRMLVSSEDVLHSWAVPSLGLKTDAIPGRLNQTTLMAMRPGLYYGQCSEICGSNHSFMPIVLEMVPLSYFETWSALMV.

Residues 1 to 14 (MAYPFQLGLQDATS) lie on the Mitochondrial intermembrane side of the membrane. A helical membrane pass occupies residues 15–45 (PIMEELLHFHDHTLMIVFLISSLVLYIISLM). Over 46 to 59 (LTTKLTHTSTMDAQ) the chain is Mitochondrial matrix. A helical membrane pass occupies residues 60–87 (EVETVWTILPAIILILIALPSLRILYMM). The Mitochondrial intermembrane portion of the chain corresponds to 88 to 227 (DEINNPSLTV…YFETWSALMV (140 aa)). Residues His161, Cys196, Glu198, Cys200, His204, and Met207 each coordinate Cu cation. Residue Glu198 coordinates Mg(2+). Phosphotyrosine is present on Tyr218.

It belongs to the cytochrome c oxidase subunit 2 family. Component of the cytochrome c oxidase (complex IV, CIV), a multisubunit enzyme composed of 14 subunits. The complex is composed of a catalytic core of 3 subunits MT-CO1, MT-CO2 and MT-CO3, encoded in the mitochondrial DNA, and 11 supernumerary subunits COX4I, COX5A, COX5B, COX6A, COX6B, COX6C, COX7A, COX7B, COX7C, COX8 and NDUFA4, which are encoded in the nuclear genome. The complex exists as a monomer or a dimer and forms supercomplexes (SCs) in the inner mitochondrial membrane with NADH-ubiquinone oxidoreductase (complex I, CI) and ubiquinol-cytochrome c oxidoreductase (cytochrome b-c1 complex, complex III, CIII), resulting in different assemblies (supercomplex SCI(1)III(2)IV(1) and megacomplex MCI(2)III(2)IV(2)). Found in a complex with TMEM177, COA6, COX18, COX20, SCO1 and SCO2. Interacts with TMEM177 in a COX20-dependent manner. Interacts with COX20. Interacts with COX16. Requires Cu cation as cofactor.

It localises to the mitochondrion inner membrane. It carries out the reaction 4 Fe(II)-[cytochrome c] + O2 + 8 H(+)(in) = 4 Fe(III)-[cytochrome c] + 2 H2O + 4 H(+)(out). Component of the cytochrome c oxidase, the last enzyme in the mitochondrial electron transport chain which drives oxidative phosphorylation. The respiratory chain contains 3 multisubunit complexes succinate dehydrogenase (complex II, CII), ubiquinol-cytochrome c oxidoreductase (cytochrome b-c1 complex, complex III, CIII) and cytochrome c oxidase (complex IV, CIV), that cooperate to transfer electrons derived from NADH and succinate to molecular oxygen, creating an electrochemical gradient over the inner membrane that drives transmembrane transport and the ATP synthase. Cytochrome c oxidase is the component of the respiratory chain that catalyzes the reduction of oxygen to water. Electrons originating from reduced cytochrome c in the intermembrane space (IMS) are transferred via the dinuclear copper A center (CU(A)) of subunit 2 and heme A of subunit 1 to the active site in subunit 1, a binuclear center (BNC) formed by heme A3 and copper B (CU(B)). The BNC reduces molecular oxygen to 2 water molecules using 4 electrons from cytochrome c in the IMS and 4 protons from the mitochondrial matrix. The chain is Cytochrome c oxidase subunit 2 (MT-CO2) from Canis mesomelas elongae (Eastern African black-backed jackal).